The sequence spans 754 residues: 5-methyltetrahydropteroyltriglutamate--homocysteine methyltransferase (754 aa).

5-methyltetrahydropteroyltri-L-glutamate is bound by residues 15-18 (RELK) and lysine 114. L-homocysteine is bound by residues 430 to 432 (IGS) and glutamate 483. Residues 430–432 (IGS) and glutamate 483 each bind L-methionine. Residues 514-515 (RC) and tryptophan 560 each bind 5-methyltetrahydropteroyltri-L-glutamate. Position 598 (aspartate 598) interacts with L-homocysteine. Residue aspartate 598 participates in L-methionine binding. Glutamate 604 provides a ligand contact to 5-methyltetrahydropteroyltri-L-glutamate. Positions 641, 643, and 665 each coordinate Zn(2+). Catalysis depends on histidine 694, which acts as the Proton donor. Cysteine 726 contributes to the Zn(2+) binding site.

The protein belongs to the vitamin-B12 independent methionine synthase family. Zn(2+) serves as cofactor.

The catalysed reaction is 5-methyltetrahydropteroyltri-L-glutamate + L-homocysteine = tetrahydropteroyltri-L-glutamate + L-methionine. It participates in amino-acid biosynthesis; L-methionine biosynthesis via de novo pathway; L-methionine from L-homocysteine (MetE route): step 1/1. Catalyzes the transfer of a methyl group from 5-methyltetrahydrofolate to homocysteine resulting in methionine formation. This chain is 5-methyltetrahydropteroyltriglutamate--homocysteine methyltransferase, found in Campylobacter jejuni subsp. jejuni serotype O:6 (strain 81116 / NCTC 11828).